Reading from the N-terminus, the 217-residue chain is Probable transaldolase (217 aa).

Residue Lys-83 is the Schiff-base intermediate with substrate of the active site.

Belongs to the transaldolase family. Type 3B subfamily.

The protein localises to the cytoplasm. The catalysed reaction is D-sedoheptulose 7-phosphate + D-glyceraldehyde 3-phosphate = D-erythrose 4-phosphate + beta-D-fructose 6-phosphate. Its pathway is carbohydrate degradation; pentose phosphate pathway; D-glyceraldehyde 3-phosphate and beta-D-fructose 6-phosphate from D-ribose 5-phosphate and D-xylulose 5-phosphate (non-oxidative stage): step 2/3. Functionally, transaldolase is important for the balance of metabolites in the pentose-phosphate pathway. This chain is Probable transaldolase, found in Clostridium botulinum (strain Hall / ATCC 3502 / NCTC 13319 / Type A).